A 251-amino-acid polypeptide reads, in one-letter code: Small ribosomal subunit protein uS2 (251 aa).

The protein belongs to the universal ribosomal protein uS2 family.

The polypeptide is Small ribosomal subunit protein uS2 (Nitrosomonas europaea (strain ATCC 19718 / CIP 103999 / KCTC 2705 / NBRC 14298)).